We begin with the raw amino-acid sequence, 405 residues long: Arginine biosynthesis bifunctional protein ArgJ (405 aa).

Positions 152, 178, 189, 276, 400, and 405 each coordinate substrate. Threonine 189 serves as the catalytic Nucleophile.

The protein belongs to the ArgJ family. Heterotetramer of two alpha and two beta chains.

Its subcellular location is the cytoplasm. It catalyses the reaction N(2)-acetyl-L-ornithine + L-glutamate = N-acetyl-L-glutamate + L-ornithine. It carries out the reaction L-glutamate + acetyl-CoA = N-acetyl-L-glutamate + CoA + H(+). It participates in amino-acid biosynthesis; L-arginine biosynthesis; L-ornithine and N-acetyl-L-glutamate from L-glutamate and N(2)-acetyl-L-ornithine (cyclic): step 1/1. The protein operates within amino-acid biosynthesis; L-arginine biosynthesis; N(2)-acetyl-L-ornithine from L-glutamate: step 1/4. Its function is as follows. Catalyzes two activities which are involved in the cyclic version of arginine biosynthesis: the synthesis of N-acetylglutamate from glutamate and acetyl-CoA as the acetyl donor, and of ornithine by transacetylation between N(2)-acetylornithine and glutamate. The chain is Arginine biosynthesis bifunctional protein ArgJ from Pseudomonas fluorescens (strain Pf0-1).